The primary structure comprises 231 residues: Large ribosomal subunit protein uL1 (231 aa).

The protein belongs to the universal ribosomal protein uL1 family. In terms of assembly, part of the 50S ribosomal subunit.

Functionally, binds directly to 23S rRNA. The L1 stalk is quite mobile in the ribosome, and is involved in E site tRNA release. Its function is as follows. Protein L1 is also a translational repressor protein, it controls the translation of the L11 operon by binding to its mRNA. This is Large ribosomal subunit protein uL1 from Staphylococcus haemolyticus (strain JCSC1435).